The chain runs to 227 residues: Lipoprotein-releasing system ATP-binding protein LolD (227 aa).

The region spanning 7–227 is the ABC transporter domain; it reads LRLERIGRAY…TLKDGRVVDL (221 aa). ATP is bound at residue 43 to 50; the sequence is APSGAGKS.

It belongs to the ABC transporter superfamily. Lipoprotein translocase (TC 3.A.1.125) family. The complex is composed of two ATP-binding proteins (LolD) and two transmembrane proteins (LolC and LolE).

It localises to the cell inner membrane. Functionally, part of the ABC transporter complex LolCDE involved in the translocation of mature outer membrane-directed lipoproteins, from the inner membrane to the periplasmic chaperone, LolA. Responsible for the formation of the LolA-lipoprotein complex in an ATP-dependent manner. The chain is Lipoprotein-releasing system ATP-binding protein LolD from Brucella abortus biovar 1 (strain 9-941).